The primary structure comprises 458 residues: UDP-N-acetylmuramoylalanine--D-glutamate ligase (458 aa).

Residue 124–130 coordinates ATP; sequence GSDGKTT.

Belongs to the MurCDEF family.

The protein resides in the cytoplasm. The enzyme catalyses UDP-N-acetyl-alpha-D-muramoyl-L-alanine + D-glutamate + ATP = UDP-N-acetyl-alpha-D-muramoyl-L-alanyl-D-glutamate + ADP + phosphate + H(+). It participates in cell wall biogenesis; peptidoglycan biosynthesis. Its function is as follows. Cell wall formation. Catalyzes the addition of glutamate to the nucleotide precursor UDP-N-acetylmuramoyl-L-alanine (UMA). The polypeptide is UDP-N-acetylmuramoylalanine--D-glutamate ligase (Clostridium tetani (strain Massachusetts / E88)).